Reading from the N-terminus, the 60-residue chain is Large ribosomal subunit protein bL32 (60 aa).

Residues 1–21 (MAVPRNRHSNARKNIRRSHDA) form a disordered region.

The protein belongs to the bacterial ribosomal protein bL32 family.

The chain is Large ribosomal subunit protein bL32 from Chlamydia felis (strain Fe/C-56) (Chlamydophila felis).